The primary structure comprises 576 residues: Aspartate--tRNA ligase (576 aa).

Glutamate 170 is an L-aspartate binding site. The tract at residues 194–197 (QLFK) is aspartate. An L-aspartate-binding site is contributed by arginine 216. ATP is bound by residues 216–218 (RDE) and glutamine 225. Histidine 438 is an L-aspartate binding site. Glutamate 471 is an ATP binding site. An L-aspartate-binding site is contributed by arginine 478. Residue 523–526 (GLDR) coordinates ATP.

It belongs to the class-II aminoacyl-tRNA synthetase family. Type 1 subfamily. In terms of assembly, homodimer.

The protein localises to the cytoplasm. It carries out the reaction tRNA(Asp) + L-aspartate + ATP = L-aspartyl-tRNA(Asp) + AMP + diphosphate. Its function is as follows. Catalyzes the attachment of L-aspartate to tRNA(Asp) in a two-step reaction: L-aspartate is first activated by ATP to form Asp-AMP and then transferred to the acceptor end of tRNA(Asp). The protein is Aspartate--tRNA ligase of Fervidobacterium nodosum (strain ATCC 35602 / DSM 5306 / Rt17-B1).